The sequence spans 138 residues: Small ribosomal subunit protein uS9 (138 aa).

The disordered stretch occupies residues 99 to 138 (DPDNRPPLKTEGYLTRDPRAKERKKYGLHKARKAPQYSKR). Residues 100 to 118 (PDNRPPLKTEGYLTRDPRA) show a composition bias toward basic and acidic residues. Basic residues predominate over residues 119–138 (KERKKYGLHKARKAPQYSKR).

This sequence belongs to the universal ribosomal protein uS9 family.

In Nostoc punctiforme (strain ATCC 29133 / PCC 73102), this protein is Small ribosomal subunit protein uS9.